The chain runs to 158 residues: Histone H2B.1 (158 aa).

Lys7 and Lys25 each carry N6-acetyllysine. Disordered regions lie at residues 26–45 and 135–158; these read AAAGKDGKAGIMTPKKPKKG and VHNFESETSKKNSQGRKRGRGQQT. Positions 135-144 are enriched in basic and acidic residues; the sequence is VHNFESETSK. Residues 147 to 158 are compositionally biased toward basic residues; sequence SQGRKRGRGQQT.

This sequence belongs to the histone H2B family. The nucleosome is a histone octamer containing two molecules each of H2A, H2B, H3 and H4 assembled in one H3-H4 heterotetramer and two H2A-H2B heterodimers. The octamer wraps approximately 147 bp of DNA. Post-translationally, can be acetylated to form H2BK6ac and H2BK33ac. As to expression, expressed in the generative cell within the bicellular pollen. Not detected in other reproductive or vegetative tissues.

Its subcellular location is the nucleus. It localises to the chromosome. Core component of nucleosome. Nucleosomes wrap and compact DNA into chromatin, limiting DNA accessibility to the cellular machineries which require DNA as a template. Histones thereby play a central role in transcription regulation, DNA repair, DNA replication and chromosomal stability. DNA accessibility is regulated via a complex set of post-translational modifications of histones, also called histone code, and nucleosome remodeling. The polypeptide is Histone H2B.1 (Lilium longiflorum (Trumpet lily)).